The chain runs to 621 residues: Phosphomethylpyrimidine synthase (621 aa).

Over residues 1–23 (MTAPFLSSLSPTSPLASATAPFP) the composition is skewed to low complexity. Positions 1-29 (MTAPFLSSLSPTSPLASATAPFPGSRKVY) are disordered. Residues N215, M244, Y273, H309, 329 to 331 (SRG), 370 to 373 (DGLR), and E409 each bind substrate. A Zn(2+)-binding site is contributed by H413. Y436 lines the substrate pocket. Residue H477 coordinates Zn(2+). [4Fe-4S] cluster is bound by residues C557, C560, and C565.

It belongs to the ThiC family. In terms of assembly, homodimer. The cofactor is [4Fe-4S] cluster.

The enzyme catalyses 5-amino-1-(5-phospho-beta-D-ribosyl)imidazole + S-adenosyl-L-methionine = 4-amino-2-methyl-5-(phosphooxymethyl)pyrimidine + CO + 5'-deoxyadenosine + formate + L-methionine + 3 H(+). It functions in the pathway cofactor biosynthesis; thiamine diphosphate biosynthesis. Its function is as follows. Catalyzes the synthesis of the hydroxymethylpyrimidine phosphate (HMP-P) moiety of thiamine from aminoimidazole ribotide (AIR) in a radical S-adenosyl-L-methionine (SAM)-dependent reaction. The sequence is that of Phosphomethylpyrimidine synthase from Rhodospirillum rubrum (strain ATCC 11170 / ATH 1.1.1 / DSM 467 / LMG 4362 / NCIMB 8255 / S1).